Here is a 406-residue protein sequence, read N- to C-terminus: MPEVVFSVDHSKSMRDQAVPGHNRWHPDIPAAATVKPGSEFRIECKEWTDGQIGNNDSANDVRDVDLAPCHMLSGPIKVEGAEPGDLLIVDILDIGPVPQTNGPNCGEGWGYSGIFAKVNGGGFLTDYYPDAYKAIWDFHGQQCTSRHVPGVRYTGITHPGLFGTAPSPDLLAKWNERERALIATDPDRVPPLALPPLVDGTLGGTASGDLLQAIANDGARTVPPRENGGNHDIKNFTRGSRIFYPVFVEGAMLSGGDLHFSQGDGEINFCGAIEMGGFIDMHVDLIKGGMETYGVTTNPIFMPGRVEPLYSEWLTFIGISVDHAENRNAYMDATMAYRNACLNAIEYLKKWGYTGEQAYLILGTSPIEGASAASWTSRTHVVRCSCRPRSSTSTSPRRQGPAEGR.

A compositionally biased stretch (low complexity) spans 387–399 (CRPRSSTSTSPRR). Positions 387-406 (CRPRSSTSTSPRRQGPAEGR) are disordered.

The protein belongs to the acetamidase/formamidase family.

The catalysed reaction is a monocarboxylic acid amide + H2O = a monocarboxylate + NH4(+). The enzyme catalyses acetamide + H2O = acetate + NH4(+). Functionally, allows acetamide to be used as a sole carbon or nitrogen source. The sequence is that of Acetamidase (amdA) from Mycolicibacterium smegmatis (Mycobacterium smegmatis).